Consider the following 138-residue polypeptide: Lymphocyte antigen 6L (138 aa).

The first 16 residues, 1-16 (MERLVLTLCTLPLAVA), serve as a signal peptide directing secretion. N-linked (GlcNAc...) asparagine glycosylation is present at Asn-27. Positions 28 to 122 (LSCYQCFKVS…TPQEGRWALR (95 aa)) constitute a UPAR/Ly6 domain. 2 disulfides stabilise this stretch: Cys-30–Cys-47 and Cys-103–Cys-108. Residue Gly-117 is the site of GPI-anchor amidated glycine attachment. Residues 118–138 (RWALRGGLLLQVGLSLLRALL) constitute a propeptide, removed in mature form.

It is found in the cell membrane. The chain is Lymphocyte antigen 6L from Homo sapiens (Human).